Here is a 794-residue protein sequence, read N- to C-terminus: Protein sel-1 homolog 1 (794 aa).

A signal peptide spans 1–21 (MQVRVRLLLLLCAVLLGSAAA). The interaction with ERLEC1, OS9 and SYVN1 stretch occupies residues 22–737 (SSDEETNQDE…DLFTQLDMDQ (716 aa)). Residues 22-738 (SSDEETNQDE…LFTQLDMDQL (717 aa)) are Lumenal-facing. The span at 23–32 (SDEETNQDES) shows a compositional bias: acidic residues. Disordered stretches follow at residues 23–46 (SDEE…GSVK) and 73–105 (QDEE…KTYE). Residues 122–170 (AHGEPCHFPFLFLDKEYDECTSDGREDGRLWCATTYDYKTDEKWGFCET) enclose the Fibronectin type-II domain. Cystine bridges form between C127–C153 and C141–C168. 9 Sel1-like repeats span residues 183–218 (AEAI…GMNH), 219–254 (TKAL…EEGS), 255–290 (PKGQ…LGGN), 291–326 (LIAH…NHVA), 373–409 (VQAQ…NAGN), 410–446 (SHAM…DMGN), 447–482 (PVGQ…EQGW), 483–518 (VDGQ…QGGH), and 519–554 (ILAF…ERGR). N-linked (GlcNAc...) asparagine glycans are attached at residues N195 and N217. N272 is a glycosylation site (N-linked (GlcNAc...) asparagine). Positions 352-537 (NSGMLEEDLI…MHASGTGVMR (186 aa)) are important for homodimerization and oligomerization. A glycan (N-linked (GlcNAc...) asparagine) is linked at N431. An N-linked (GlcNAc...) asparagine glycan is attached at N608. Sel1-like repeat units follow at residues 627–662 (TVAR…EQQH) and 664–699 (AQAM…EASP). An interaction with SYVN1 region spans residues 643–723 (TDVDYETAFI…VVYFLQYIRE (81 aa)). Residues 738–794 (LLGPEWDLYLMTIIALLLGTVIAYRQRQHQDIPVPRPPGPRPAPPQQEGPPEQQPPQ) form a mediates retention in the endoplasmic reticulum region. The helical transmembrane segment at 739-759 (LGPEWDLYLMTIIALLLGTVI) threads the bilayer. Over 760–794 (AYRQRQHQDIPVPRPPGPRPAPPQQEGPPEQQPPQ) the chain is Cytoplasmic. The tract at residues 767–794 (QDIPVPRPPGPRPAPPQQEGPPEQQPPQ) is disordered. The segment covering 771–794 (VPRPPGPRPAPPQQEGPPEQQPPQ) has biased composition (pro residues).

Belongs to the sel-1 family. Homodimer and homooligomer. May form a complex with ERLEC1, HSPA5, OS9, and SYVN1. Interacts with FOXRED2 and EDEM1. Interacts with LPL and LMF1; may stabilize the complex formed by LPL and LMF1 and thereby promote the export of LPL dimers. Component of the HRD1 complex, which comprises at least SYNV1/HRD1, DERL1/2, FAM8A1, HERPUD1/HERP, OS9, SEL1L and UBE2J1. SYNV1 assembles with SEL1L and FAM8A1 through its transmembrane domains, but interaction with its cytoplasmic domain is required to confer stability to FAM8A1 and enhance recruitment of HERPUD1. The interaction with SYNV1/HRD1 is direct. Post-translationally, N-glycosylated.

Its subcellular location is the endoplasmic reticulum membrane. Plays a role in the endoplasmic reticulum quality control (ERQC) system also called ER-associated degradation (ERAD) involved in ubiquitin-dependent degradation of misfolded endoplasmic reticulum proteins. Enhances SYVN1 stability. Plays a role in LPL maturation and secretion. Required for normal differentiation of the pancreas epithelium, and for normal exocrine function and survival of pancreatic cells. May play a role in Notch signaling. The polypeptide is Protein sel-1 homolog 1 (Sel1l) (Rattus norvegicus (Rat)).